We begin with the raw amino-acid sequence, 98 residues long: Small ribosomal subunit protein bS20 (98 aa).

Positions 1–15 are enriched in basic residues; it reads MAPKKTTKKGGPKKR. The tract at residues 1-21 is disordered; the sequence is MAPKKTTKKGGPKKRPSAEKR.

The protein belongs to the bacterial ribosomal protein bS20 family.

Binds directly to 16S ribosomal RNA. The polypeptide is Small ribosomal subunit protein bS20 (Chlamydia felis (strain Fe/C-56) (Chlamydophila felis)).